We begin with the raw amino-acid sequence, 183 residues long: Inner membrane-spanning protein YciB (183 aa).

5 helical membrane passes run 10 to 30 (LVIF…GALI), 50 to 70 (MHLI…VFHD), 72 to 92 (AFIK…LAVS), 118 to 138 (VTWY…YVAF), and 148 to 168 (FKVF…VIYL).

Belongs to the YciB family.

The protein localises to the cell inner membrane. Plays a role in cell envelope biogenesis, maintenance of cell envelope integrity and membrane homeostasis. In Shewanella sediminis (strain HAW-EB3), this protein is Inner membrane-spanning protein YciB.